The chain runs to 274 residues: Nitrogenase iron protein (274 aa).

8–15 lines the ATP pocket; sequence GKGGIGKS. Cys-94 provides a ligand contact to [4Fe-4S] cluster. Arg-97 is modified (ADP-ribosylarginine; by dinitrogenase reductase ADP-ribosyltransferase). Residue Cys-131 coordinates [4Fe-4S] cluster.

It belongs to the NifH/BchL/ChlL family. In terms of assembly, homodimer. [4Fe-4S] cluster serves as cofactor. In terms of processing, the reversible ADP-ribosylation of Arg-97 inactivates the nitrogenase reductase and regulates nitrogenase activity.

The catalysed reaction is N2 + 8 reduced [2Fe-2S]-[ferredoxin] + 16 ATP + 16 H2O = H2 + 8 oxidized [2Fe-2S]-[ferredoxin] + 2 NH4(+) + 16 ADP + 16 phosphate + 6 H(+). In terms of biological role, the key enzymatic reactions in nitrogen fixation are catalyzed by the nitrogenase complex, which has 2 components: the iron protein and the molybdenum-iron protein. This chain is Nitrogenase iron protein, found in Desulfatibacillum aliphaticivorans.